A 575-amino-acid chain; its full sequence is Dihydroxy-acid dehydratase (575 aa).

The segment at 1-25 (MPTTDSARAADIKQPDIKPRSRDVT) is disordered. Residues 8-25 (RAADIKQPDIKPRSRDVT) are compositionally biased toward basic and acidic residues. Cysteine 64 contacts [2Fe-2S] cluster. Position 96 (aspartate 96) interacts with Mg(2+). Position 137 (cysteine 137) interacts with [2Fe-2S] cluster. 2 residues coordinate Mg(2+): aspartate 138 and lysine 139. The residue at position 139 (lysine 139) is an N6-carboxylysine. Cysteine 214 is a [2Fe-2S] cluster binding site. Position 465 (glutamate 465) interacts with Mg(2+). Catalysis depends on serine 491, which acts as the Proton acceptor.

It belongs to the IlvD/Edd family. Homodimer. [2Fe-2S] cluster is required as a cofactor. Requires Mg(2+) as cofactor.

It carries out the reaction (2R)-2,3-dihydroxy-3-methylbutanoate = 3-methyl-2-oxobutanoate + H2O. The enzyme catalyses (2R,3R)-2,3-dihydroxy-3-methylpentanoate = (S)-3-methyl-2-oxopentanoate + H2O. It participates in amino-acid biosynthesis; L-isoleucine biosynthesis; L-isoleucine from 2-oxobutanoate: step 3/4. Its pathway is amino-acid biosynthesis; L-valine biosynthesis; L-valine from pyruvate: step 3/4. Functions in the biosynthesis of branched-chain amino acids. Catalyzes the dehydration of (2R,3R)-2,3-dihydroxy-3-methylpentanoate (2,3-dihydroxy-3-methylvalerate) into 2-oxo-3-methylpentanoate (2-oxo-3-methylvalerate) and of (2R)-2,3-dihydroxy-3-methylbutanoate (2,3-dihydroxyisovalerate) into 2-oxo-3-methylbutanoate (2-oxoisovalerate), the penultimate precursor to L-isoleucine and L-valine, respectively. The protein is Dihydroxy-acid dehydratase of Mycolicibacterium paratuberculosis (strain ATCC BAA-968 / K-10) (Mycobacterium paratuberculosis).